The chain runs to 208 residues: MSRFIGSTFKKSRRFGFSILETGKEFSKGKKRITTPGQHGKERAKVKVSEYGQQLQEKQKVKFMYGLSERQFRNTFAKAKKMQGILGTNFLVLLESRLDNIVYRLGFSATRQGARQLVNHGHILVNGKKVDIPSYLLSVGDLVEVKASMKKNEKVLEALQNNEATLEFVKVNKNEVKGEFVRLPERNELNSEISESLIVEWYNRLIKK.

One can recognise an S4 RNA-binding domain in the interval 96 to 159 (SRLDNIVYRL…KKNEKVLEAL (64 aa)).

It belongs to the universal ribosomal protein uS4 family. As to quaternary structure, part of the 30S ribosomal subunit. Contacts protein S5. The interaction surface between S4 and S5 is involved in control of translational fidelity.

Functionally, one of the primary rRNA binding proteins, it binds directly to 16S rRNA where it nucleates assembly of the body of the 30S subunit. Its function is as follows. With S5 and S12 plays an important role in translational accuracy. In Mycoplasma capricolum subsp. capricolum (strain California kid / ATCC 27343 / NCTC 10154), this protein is Small ribosomal subunit protein uS4.